The primary structure comprises 1288 residues: Photoreceptor cilium actin regulator (1288 aa).

Gly2 carries N-myristoyl glycine lipidation. A lipid anchor (S-palmitoyl cysteine) is attached at Cys3. 9 disordered regions span residues 78–147, 368–401, 423–453, 467–527, 563–605, 686–707, 813–1109, 1132–1169, and 1190–1288; these read MGDP…KWKR, QTSWDLAPEPEEWKSVTSPHTEARQSGHTWQQSP, QPRAQDEARSPCLSSTSPENITSPPLKLGTS, PHLS…PFQA, DWSE…SHVE, QKCNPHPEDEQGKAGKLPNAIP, AAKS…EDSQ, EAKPPLSTAHPLTPPSLPPEAGGPLGNPAECWKNSSGP, and LRRT…EEVS. 3 stretches are compositionally biased toward polar residues: residues 96–109, 382–401, and 434–453; these read TKTSSSQLNKSQSH, SVTSPHTEARQSGHTWQQSP, and CLSSTSPENITSPPLKLGTS. Residues 483-495 are compositionally biased toward acidic residues; sequence DSEDSSPEEEEED. Polar residues-rich tracts occupy residues 848–857, 894–904, 927–946, and 966–976; these read SPESSKSTEN, SKSTASLTKPH, PPATSQSPEVKGGTWSQAEK, and PSGQNRTSESS. The span at 1018 to 1028 shows a compositional bias: low complexity; the sequence is PAQPSPSAVQT. Composition is skewed to pro residues over residues 1051–1063 and 1071–1094; these read PHQPKLPNPPPES and PSPPTQHPEASPPFSIPSPSPPMS. The segment covering 1097-1106 has biased composition (basic and acidic residues); that stretch reads QEHKETRDSE. Residues 1209–1226 show a composition bias toward polar residues; the sequence is DPTSTSYESQLGQNSSSE. The segment covering 1268–1277 has biased composition (basic and acidic residues); the sequence is RTGHIQDKSQ. Positions 1278 to 1288 are enriched in polar residues; sequence PEAQPQQEEVS.

As to expression, specifically expressed in retina.

Its subcellular location is the cell projection. The protein resides in the cilium. It is found in the photoreceptor outer segment. The protein localises to the photoreceptor inner segment. In terms of biological role, plays an essential role for normal photoreceptor cell maintenance and vision. The chain is Photoreceptor cilium actin regulator from Homo sapiens (Human).